Here is a 322-residue protein sequence, read N- to C-terminus: Ras-like protein 2 (322 aa).

Residues 20–25 (GVGKSA), 36–42 (VDEYDPT), 66–67 (AG), and 123–126 (NKSD) contribute to the GTP site. The Effector region signature appears at 39-47 (YDPTIEDSY). A Glycyl lysine isopeptide (Lys-Gly) (interchain with G-Cter in ubiquitin) cross-link involves residue lysine 131. 153–155 (SAK) serves as a coordination point for GTP. The disordered stretch occupies residues 178 to 322 (YNKTLTENDN…SGSGGCCIIS (145 aa)). A compositionally biased stretch (polar residues) spans 180 to 205 (KTLTENDNSKQTSQDTKGSGANSVPR). A phosphoserine mark is found at serine 198, serine 202, serine 207, serine 214, serine 235, and serine 238. Polar residues predominate over residues 215–252 (NAANGKNVNSSTTVVNARNASIESKTGLAGNQATNGKT). The segment covering 261-284 (NSTGQAGQANAQSANTVNNRVNNN) has biased composition (low complexity). The segment covering 285 to 294 (SKAGQVSNAK) has biased composition (polar residues). A lipid anchor (S-palmitoyl cysteine) is attached at cysteine 318. Cysteine methyl ester is present on cysteine 319. A lipid anchor (S-farnesyl cysteine) is attached at cysteine 319. Residues 320–322 (IIS) constitute a propeptide, removed in mature form.

Belongs to the small GTPase superfamily. Ras family. In terms of processing, farnesylated by RAM1-RAM2, which is required for targeting RAS2 to the cytoplasmic site of the endoplasmic reticulum, where proteolytic processing of the C-terminus by RCE1 and methylation of the resulting carboxyl group by STE14 occurs. Post-translationally, palmitoylated by the ERF2-SHR5 complex, which is required for proper plasma membrane localization of RAS2.

It localises to the cell membrane. It catalyses the reaction GTP + H2O = GDP + phosphate + H(+). With respect to regulation, alternates between an inactive form bound to GDP and an active form bound to GTP. Activated by guanine nucleotide-exchange factor (GEF) CDC25 and inactivated by GTPase-activating proteins (GAPs) IRA1 and IRA2. In terms of biological role, the S.cerevisiae Ras proteins modulate the activity of the adenylate cyclase catalytic subunit and therefore affect the biosynthesis of cyclic-AMP. This is Ras-like protein 2 (RAS2) from Saccharomyces cerevisiae (strain ATCC 204508 / S288c) (Baker's yeast).